The following is a 225-amino-acid chain: Cytidylate kinase (225 aa).

Position 12–20 (12–20) interacts with ATP; sequence GPSGAGKGT.

The protein belongs to the cytidylate kinase family. Type 1 subfamily.

It localises to the cytoplasm. The catalysed reaction is CMP + ATP = CDP + ADP. It carries out the reaction dCMP + ATP = dCDP + ADP. In Edwardsiella ictaluri (strain 93-146), this protein is Cytidylate kinase.